Reading from the N-terminus, the 593-residue chain is Tectonic-1 (593 aa).

The signal sequence occupies residues 1-22 (MGSRGLPPLLLVLLNCYTSSST). The interval 37–72 (KEDLNSTKATPTTLQPSLSPRTPGTPRAPERSGPRP) is disordered. The N-linked (GlcNAc...) asparagine glycan is linked to N41. A compositionally biased stretch (polar residues) spans 42-58 (STKATPTTLQPSLSPRT). The N-linked (GlcNAc...) asparagine glycan is linked to N303. R486 carries the omega-N-methylarginine modification. A glycan (N-linked (GlcNAc...) asparagine) is linked at N536.

It belongs to the tectonic family. As to quaternary structure, part of the tectonic-like complex (also named B9 complex).

It is found in the cytoplasm. Its subcellular location is the cytoskeleton. The protein localises to the cilium basal body. The protein resides in the secreted. Its function is as follows. Component of the tectonic-like complex, a complex localized at the transition zone of primary cilia and acting as a barrier that prevents diffusion of transmembrane proteins between the cilia and plasma membranes. Regulator of Hedgehog (Hh), required for both activation and inhibition of the Hh pathway in the patterning of the neural tube. During neural tube development, it is required for formation of the most ventral cell types and for full Hh pathway activation. Functions in Hh signal transduction to fully activate the pathway in the presence of high Hh levels and to repress the pathway in the absence of Hh signals. Modulates Hh signal transduction downstream of SMO and RAB23. This Mus musculus (Mouse) protein is Tectonic-1 (Tctn1).